A 395-amino-acid chain; its full sequence is ATP synthase subunit beta, chloroplastic (395 aa).

Position 72–79 (72–79 (GGAGVGKT)) interacts with ATP.

The protein belongs to the ATPase alpha/beta chains family. As to quaternary structure, F-type ATPases have 2 components, CF(1) - the catalytic core - and CF(0) - the membrane proton channel. CF(1) has five subunits: alpha(3), beta(3), gamma(1), delta(1), epsilon(1). CF(0) has four main subunits: a(1), b(1), b'(1) and c(9-12).

Its subcellular location is the plastid. It localises to the chloroplast thylakoid membrane. The catalysed reaction is ATP + H2O + 4 H(+)(in) = ADP + phosphate + 5 H(+)(out). Produces ATP from ADP in the presence of a proton gradient across the membrane. The catalytic sites are hosted primarily by the beta subunits. This chain is ATP synthase subunit beta, chloroplastic, found in Blechnum occidentale (Hammock fern).